The following is a 385-amino-acid chain: Calcium/calmodulin-dependent protein kinase type 1D (385 aa).

Residues 23 to 279 (FEFKETLGTG…CEQAARHPWI (257 aa)) enclose the Protein kinase domain. ATP contacts are provided by residues 29–37 (LGTGAFSEV) and lysine 52. Residue lysine 113 forms a Glycyl lysine isopeptide (Lys-Gly) (interchain with G-Cter in SUMO2) linkage. Phosphoserine is present on serine 122. Aspartate 144 serves as the catalytic Proton acceptor. The residue at position 180 (threonine 180) is a Phosphothreonine; by CaMKK1 and CaMKK2. Residues 279–319 (IAGDTALSKNIHESVSAQIRKNFAKSKWRQAFNATAVVRHM) are autoinhibitory domain. The calmodulin-binding stretch occupies residues 299–320 (KNFAKSKWRQAFNATAVVRHMR). The Nuclear export signal signature appears at 318-324 (HMRRLQL). A disordered region spans residues 363 to 385 (VAGVGAERRPRPTTVTTGHTGSK). A compositionally biased stretch (polar residues) spans 375–385 (TTVTTGHTGSK).

Belongs to the protein kinase superfamily. CAMK Ser/Thr protein kinase family. CaMK subfamily. In terms of tissue distribution, expressed ubiquitously with high levels in brain and low levels in kidney. Isoform 2 is highly expressed in brain compared to other tissues. In hematopoietic cell lines predominant expression was detected in T and EC cells.

Its subcellular location is the cytoplasm. The protein resides in the nucleus. It catalyses the reaction L-seryl-[protein] + ATP = O-phospho-L-seryl-[protein] + ADP + H(+). The enzyme catalyses L-threonyl-[protein] + ATP = O-phospho-L-threonyl-[protein] + ADP + H(+). Activated by Ca(2+)/calmodulin. Binding of calmodulin results in conformational change that relieves intrasteric autoinhibition and allows phosphorylation of Thr-180 within the activation loop by CaMKK1 or CaMKK2. Phosphorylation of Thr-180 results in several fold increase in total activity. Unlike CaMK4, may be unable to exhibit autonomous activity after Ca(2+)/calmodulin activation. In terms of biological role, calcium/calmodulin-dependent protein kinase that operates in the calcium-triggered CaMKK-CaMK1 signaling cascade and, upon calcium influx, activates CREB-dependent gene transcription, regulates calcium-mediated granulocyte function and respiratory burst and promotes basal dendritic growth of hippocampal neurons. In neutrophil cells, required for cytokine-induced proliferative responses and activation of the respiratory burst. Activates the transcription factor CREB1 in hippocampal neuron nuclei. May play a role in apoptosis of erythroleukemia cells. In vitro, phosphorylates transcription factor CREM isoform Beta. Isoform 1 but not isoform 2 activates CREB1. In Mus musculus (Mouse), this protein is Calcium/calmodulin-dependent protein kinase type 1D (Camk1d).